A 238-amino-acid chain; its full sequence is tRNA (guanine-N(7)-)-methyltransferase (238 aa).

S-adenosyl-L-methionine contacts are provided by glutamate 68, glutamate 93, aspartate 120, and aspartate 143. The active site involves aspartate 143. Residues lysine 147, aspartate 179, and 216 to 219 contribute to the substrate site; that span reads TKFE.

This sequence belongs to the class I-like SAM-binding methyltransferase superfamily. TrmB family. Monomer.

The enzyme catalyses guanosine(46) in tRNA + S-adenosyl-L-methionine = N(7)-methylguanosine(46) in tRNA + S-adenosyl-L-homocysteine. It participates in tRNA modification; N(7)-methylguanine-tRNA biosynthesis. Catalyzes the formation of N(7)-methylguanine at position 46 (m7G46) in tRNA. This chain is tRNA (guanine-N(7)-)-methyltransferase, found in Edwardsiella ictaluri (strain 93-146).